Reading from the N-terminus, the 547-residue chain is MSSAKLGSASEDVSRRDANYHPTVWGDFFLTHSSDFLENNDSILEKHEELKQEVRNLLVVETSDLPSKIQLTDDIIRLGVGYHFETEIKAQLEKLHDHQLHLNFDLLTTSVWFRLLRGHGFSISSDVFKRFKNTKGEFETEDARTLWCLYEATHLRVDGEDILEEAIQFSRKKLEALLPELSFPLNECVRDALHIPYHRNVQRLAARQYIPQYDAEPTKIESLSLFAKIDFNMLQALHQRELREASRWWKEFDFPSKLPYARDRIAEGYYWMMGAHFEPKFSLSRKFLNRIIGITSLIDDTYDVYGTLEEVTLFTEAVERWDIEAVKDIPKYMQVIYIGMLGIFEDFKDNLINARGKDYCIDYAIEVFKEIVRSYQREAEYFHTGYVPSYDEYMENSIISGGYKMFIILMLIGRGEFELKETLDWASTIPEMVKASSLIARYIDDLQTYKAEEERGETVSAVRCYMREYDVSEEEACKKMREMIEIEWKRLNKTTLEADEVSSSVVIPSLNFTRVLEVMYDKGDGYSDSQGVTKDRIAALLRHAIEI.

Residues aspartate 299, aspartate 303, and aspartate 444 each contribute to the Mg(2+) site. Residues 299–303 carry the DDXXD motif motif; sequence DDTYD.

This sequence belongs to the terpene synthase family. Mg(2+) is required as a cofactor.

It carries out the reaction (2E,6E)-farnesyl diphosphate = delta-guaiene + diphosphate. The catalysed reaction is (2E,6E)-farnesyl diphosphate = alpha-guaiene + diphosphate. It functions in the pathway secondary metabolite biosynthesis; terpenoid biosynthesis. Functionally, sesquiterpene synthase involved in the biosynthesis of delta-guaiene (78.2%) and alpha-guaiene (20.9%), two structures composed of five- and seven-membered rings. Also produces 0.9% of alpha-humulene. The polypeptide is Delta-guaiene synthase 3 (C4) (Aquilaria crassna (Eagle wood)).